Here is a 732-residue protein sequence, read N- to C-terminus: uncharacterized protein (732 aa).

Transmembrane regions (helical) follow at residues 687 to 707 (YLFP…GSDL) and 712 to 732 (GVKV…YYTS).

The protein belongs to the FadG family.

It is found in the cell membrane. This is an uncharacterized protein from Bacillus subtilis (strain 168).